Consider the following 1023-residue polypeptide: RTX-I toxin determinant A from serotypes 1/9 (1023 aa).

The next 3 membrane-spanning stretches (helical) occupy residues 226-256, 297-326, and 367-406; these read NNLP…ILSN, STTA…ADKF, and INSV…SGIL. Hemolysin-type calcium-binding repeat units follow at residues 730–747, 748–765, 766–783, 784–801, 812–829, and 830–847; these read FGSR…DDEI, YGND…NDVI, HGGD…NDRL, IGGK…DDEL, LGGA…TNLF, and DGGV…KDIY.

Belongs to the RTX prokaryotic toxin (TC 1.C.11) family. In terms of processing, palmitoylated by ApxIC. The toxin only becomes active when modified.

The protein resides in the secreted. It is found in the host cell membrane. One of the virulence factors of A.pleuropneumoniae, which has a strong hemolytic activity and is cytotoxic for alveolar macrophages and neutrophils. The chain is RTX-I toxin determinant A from serotypes 1/9 (apxIA) from Actinobacillus pleuropneumoniae (Haemophilus pleuropneumoniae).